Consider the following 777-residue polypeptide: Rho guanine nucleotide exchange factor 38 (777 aa).

T34 bears the Phosphothreonine mark. Positions 35–72 are disordered; that stretch reads DTVVESSVSGDHSGTLRRSQSDRTEYNQKLQEKMTPQG. Positions 37–52 are enriched in polar residues; sequence VVESSVSGDHSGTLRR. Positions 53–66 are enriched in basic and acidic residues; that stretch reads SQSDRTEYNQKLQE. A DH domain is found at 94-285; sequence KREKIIKELI…KDINVNINEL (192 aa). A BAR domain is found at 327 to 536; the sequence is LKILTRGESQ…QNQVLEEIQN (210 aa). The SH3 1 domain occupies 582–645; the sequence is SAEELYQAKR…YSSFLKPYNP (64 aa). The tract at residues 673–694 is disordered; it reads PASDSVTGTSESSIGDSSSSLS. Residues 679 to 694 are compositionally biased toward low complexity; it reads TGTSESSIGDSSSSLS. Residues 713–776 enclose the SH3 2 domain; sequence VDEQIFYAVH…PANYLGKMTY (64 aa).

In terms of biological role, may act as a guanine-nucleotide releasing factor. This is Rho guanine nucleotide exchange factor 38 (ARHGEF38) from Homo sapiens (Human).